A 373-amino-acid chain; its full sequence is uncharacterized protein (373 aa).

This is an uncharacterized protein from Methanocaldococcus jannaschii (strain ATCC 43067 / DSM 2661 / JAL-1 / JCM 10045 / NBRC 100440) (Methanococcus jannaschii).